The following is a 131-amino-acid chain: NADPH-dependent 7-cyano-7-deazaguanine reductase (131 aa).

Catalysis depends on C41, which acts as the Thioimide intermediate. The Proton donor role is filled by D48. Substrate is bound by residues 63–65 (VEL) and 82–83 (HE).

It belongs to the GTP cyclohydrolase I family. QueF type 1 subfamily.

Its subcellular location is the cytoplasm. The enzyme catalyses 7-aminomethyl-7-carbaguanine + 2 NADP(+) = 7-cyano-7-deazaguanine + 2 NADPH + 3 H(+). Its pathway is tRNA modification; tRNA-queuosine biosynthesis. In terms of biological role, catalyzes the NADPH-dependent reduction of 7-cyano-7-deazaguanine (preQ0) to 7-aminomethyl-7-deazaguanine (preQ1). In Nitratiruptor sp. (strain SB155-2), this protein is NADPH-dependent 7-cyano-7-deazaguanine reductase.